Consider the following 150-residue polypeptide: Transthyretin (150 aa).

Positions 1 to 20 (MAFHSMLLVFLAGLVFLTEA) are cleaved as a signal peptide. Cys-33 bears the Sulfocysteine mark. Positions 38, 77, and 140 each coordinate L-thyroxine.

This sequence belongs to the transthyretin family. Homotetramer. Dimer of dimers. In the homotetramer, subunits assemble around a central channel that can accommodate two ligand molecules. Interacts with RBP4. Sulfonation of the reactive cysteine Cys-33 enhances the stability of the native conformation of TTR, avoiding misassembly of the protein leading to amyloid formation. Strongly expressed in the brain, and to a lesser extent in the eye.

It is found in the secreted. In terms of biological role, thyroid hormone-binding protein, with a much higher binding affinity for triiodothyronine (T3) than for thyroxine (T4). Probably transports triiodothyronine from the bloodstream to the brain. This chain is Transthyretin (TTR), found in Crocodylus porosus (Saltwater crocodile).